The chain runs to 386 residues: L-lactate dehydrogenase (386 aa).

Residues 1 to 380 (MIISASTDYR…TSDSLVQVTQ (380 aa)) enclose the FMN hydroxy acid dehydrogenase domain. Y24 provides a ligand contact to substrate. FMN is bound by residues S106 and Q127. A substrate-binding site is contributed by Y129. FMN is bound at residue T155. A substrate-binding site is contributed by R164. K251 provides a ligand contact to FMN. The Proton acceptor role is filled by H275. R278 provides a ligand contact to substrate. Position 306–330 (306–330 (DSGIRSGLDVVRMIALGADGVMLGR)) interacts with FMN.

The protein belongs to the FMN-dependent alpha-hydroxy acid dehydrogenase family. It depends on FMN as a cofactor.

Its subcellular location is the cell inner membrane. It catalyses the reaction (S)-lactate + A = pyruvate + AH2. In terms of biological role, catalyzes the conversion of L-lactate to pyruvate. Is coupled to the respiratory chain. The protein is L-lactate dehydrogenase of Pectobacterium atrosepticum (strain SCRI 1043 / ATCC BAA-672) (Erwinia carotovora subsp. atroseptica).